A 147-amino-acid chain; its full sequence is MVHLSGEEKSAVTALWGKVNVEEVGGETLGRLLVVYPWTQRFFESFGDLSTASAVMGNPKVKAHGKKVLAAFSEGLSHLDNLKGTFAKLSELHCDKLHVDPENFRLLGNVLVIVLSHHFGKEFTPQVQAAYQKVVAGVANALAHKYH.

At valine 2 the chain carries N-acetylvaline. Positions 3 to 147 constitute a Globin domain; that stretch reads HLSGEEKSAV…VANALAHKYH (145 aa). Threonine 13 carries the phosphothreonine modification. Position 45 is a phosphoserine (serine 45). Lysine 60 carries the N6-acetyllysine modification. Position 64 (histidine 64) interacts with heme b. At lysine 83 the chain carries N6-acetyllysine. Residue histidine 93 coordinates heme b. The residue at position 94 (cysteine 94) is an S-nitrosocysteine. Position 145 is an N6-acetyllysine (lysine 145).

It belongs to the globin family. As to quaternary structure, heterotetramer of two alpha chains and two beta chains. Red blood cells.

Involved in oxygen transport from the lung to the various peripheral tissues. The chain is Hemoglobin subunit beta (HBB) from Lepus europaeus (European hare).